Here is a 256-residue protein sequence, read N- to C-terminus: Hydroxyacylglutathione hydrolase (256 aa).

H57, H59, D61, H62, H115, D134, and H172 together coordinate Zn(2+).

It belongs to the metallo-beta-lactamase superfamily. Glyoxalase II family. In terms of assembly, monomer. Zn(2+) is required as a cofactor.

The enzyme catalyses an S-(2-hydroxyacyl)glutathione + H2O = a 2-hydroxy carboxylate + glutathione + H(+). Its pathway is secondary metabolite metabolism; methylglyoxal degradation; (R)-lactate from methylglyoxal: step 2/2. In terms of biological role, thiolesterase that catalyzes the hydrolysis of S-D-lactoyl-glutathione to form glutathione and D-lactic acid. This is Hydroxyacylglutathione hydrolase from Rhodospirillum rubrum (strain ATCC 11170 / ATH 1.1.1 / DSM 467 / LMG 4362 / NCIMB 8255 / S1).